A 178-amino-acid chain; its full sequence is MQLYDFYKKNVLIKLKNKFNYKSIMQVPKIEKITLNMGVGKASFDKKLLEHAVNDLTLISGQKPYITKAKKSIANFKIRQGHPIGCKVTLRGKLMWFFFQKLICIAIPRIRDFRGLPVKSFDGFGNYSLGIKEQIIFPEIDYDKIDKIRGLDITITTNAKSDKEGLALLSAFNFPFRK.

The protein belongs to the universal ribosomal protein uL5 family. As to quaternary structure, part of the 50S ribosomal subunit; part of the 5S rRNA/L5/L18/L25 subcomplex. Contacts the 5S rRNA and the P site tRNA. Forms a bridge to the 30S subunit in the 70S ribosome.

This is one of the proteins that bind and probably mediate the attachment of the 5S RNA into the large ribosomal subunit, where it forms part of the central protuberance. In the 70S ribosome it contacts protein S13 of the 30S subunit (bridge B1b), connecting the 2 subunits; this bridge is implicated in subunit movement. Contacts the P site tRNA; the 5S rRNA and some of its associated proteins might help stabilize positioning of ribosome-bound tRNAs. This Wigglesworthia glossinidia brevipalpis protein is Large ribosomal subunit protein uL5.